The chain runs to 98 residues: snRNA-activating protein complex subunit 5 (98 aa).

The disordered stretch occupies residues 75 to 98 (ALELSTRSHVQEEEEEEEEEEEDS). Residues 86–98 (EEEEEEEEEEEDS) show a composition bias toward acidic residues.

Part of the SNAPc complex composed of 5 subunits: SNAPC1, SNAPC2, SNAPC3, SNAPC4 and SNAPC5. SNAPC5 interacts with SNAPC4.

Its subcellular location is the nucleus. Part of the SNAPc complex required for the transcription of both RNA polymerase II and III small-nuclear RNA genes. Binds to the proximal sequence element (PSE), a non-TATA-box basal promoter element common to these 2 types of genes. Recruits TBP and BRF2 to the U6 snRNA TATA box. This is snRNA-activating protein complex subunit 5 (SNAPC5) from Bos taurus (Bovine).